The chain runs to 418 residues: ATP-dependent RNA helicase RhlB (418 aa).

The Q motif signature appears at 9 to 37; the sequence is TKFADLPLEKSLISGLTSQGYEYCTPIQA. The Helicase ATP-binding domain maps to 40-219; that stretch reads LPITLTGKDI…FEHMNDPESI (180 aa). ATP is bound at residue 53–60; that stretch reads AQTGTGKT. Positions 165 to 168 match the DEAD box motif; sequence DEAD. The Helicase C-terminal domain occupies 243–390; sequence KILLLLSLIE…CSEYDKNAML (148 aa).

Belongs to the DEAD box helicase family. RhlB subfamily. As to quaternary structure, component of the RNA degradosome, which is a multiprotein complex involved in RNA processing and mRNA degradation.

Its subcellular location is the cytoplasm. It carries out the reaction ATP + H2O = ADP + phosphate + H(+). In terms of biological role, DEAD-box RNA helicase involved in RNA degradation. Has RNA-dependent ATPase activity and unwinds double-stranded RNA. The sequence is that of ATP-dependent RNA helicase RhlB from Psychromonas ingrahamii (strain DSM 17664 / CCUG 51855 / 37).